The following is an 859-amino-acid chain: DNA mismatch repair protein MutS (859 aa).

Residue G618–S625 coordinates ATP.

This sequence belongs to the DNA mismatch repair MutS family.

In terms of biological role, this protein is involved in the repair of mismatches in DNA. It is possible that it carries out the mismatch recognition step. This protein has a weak ATPase activity. The sequence is that of DNA mismatch repair protein MutS from Shewanella halifaxensis (strain HAW-EB4).